We begin with the raw amino-acid sequence, 1378 residues long: Macrophage-stimulating protein receptor (1378 aa).

Positions methionine 1 to alanine 23 are cleaved as a signal peptide. At threonine 25–arginine 960 the chain is on the extracellular side. The Sema domain maps to arginine 33–isoleucine 524. A glycan (N-linked (GlcNAc...) asparagine) is linked at asparagine 91. Disulfide bonds link cysteine 102–cysteine 105, cysteine 108–cysteine 163, cysteine 136–cysteine 144, cysteine 175–cysteine 178, cysteine 301–cysteine 368, cysteine 386–cysteine 409, and cysteine 387–cysteine 424. Residues asparagine 391, asparagine 460, and asparagine 490 are each glycosylated (N-linked (GlcNAc...) asparagine). 4 cysteine pairs are disulfide-bonded: cysteine 529–cysteine 547, cysteine 535–cysteine 569, cysteine 538–cysteine 554, and cysteine 550–cysteine 560. IPT/TIG domains lie at proline 571–glutamate 673, proline 686–lysine 769, and proline 772–leucine 864. Residues asparagine 656, asparagine 722, asparagine 845, and asparagine 901 are each glycosylated (N-linked (GlcNAc...) asparagine). A helical transmembrane segment spans residues isoleucine 961–isoleucine 981. The Cytoplasmic portion of the chain corresponds to phenylalanine 982–threonine 1378. The segment at serine 1002–valine 1026 is disordered. Positions asparagine 1013–aspartate 1022 are enriched in basic and acidic residues. The 264-residue stretch at isoleucine 1059–valine 1322 folds into the Protein kinase domain. ATP contacts are provided by residues isoleucine 1065–valine 1073, lysine 1091, and leucine 1138–methionine 1141. Aspartate 1185 acts as the Proton acceptor in catalysis. Arginine 1189 contributes to the ATP binding site. A phosphotyrosine; by autocatalysis mark is found at tyrosine 1215, tyrosine 1216, tyrosine 1330, and tyrosine 1337. Positions aspartate 1347–threonine 1378 are disordered. The segment covering serine 1349–glutamine 1360 has biased composition (low complexity).

Belongs to the protein kinase superfamily. Tyr protein kinase family. As to quaternary structure, heterodimer of an alpha chain and a beta chain which are disulfide linked. Binds PLXNB1. Associates with and is negatively regulated by HYAL2. Interacts when phosphorylated with downstream effectors including PIK3R1, PCLG1, GRB2 and GAB1. Interacts with integrin beta1/ITGB1 in a ligand-independent fashion. Isoform sf-Stk forms covalent heterodimers with friend spleen focus-forming virus (FSFFV) gp55. Post-translationally, proteolytic processing yields the two subunits. In terms of processing, autophosphorylated in response to ligand binding on Tyr-1215 and Tyr-1216 in the kinase domain leading to further phosphorylation of Tyr-1330 and Tyr-1337 in the C-terminal multifunctional docking site. Ubiquitinated. Ubiquitination by CBL regulates the receptor stability and activity through proteasomal degradation. Post-translationally, O-mannosylation of IPT/TIG domains on Thr or Ser residues by TMEM260 is required for protein maturation. O-mannosylated residues are composed of single mannose glycans that are not elongated or modified. Expressed in liver, skin, lung, brain, testis and kidney.

Its subcellular location is the membrane. It catalyses the reaction L-tyrosyl-[protein] + ATP = O-phospho-L-tyrosyl-[protein] + ADP + H(+). In its inactive state, the C-terminal tail interacts with the catalytic domain and inhibits the kinase activity. Upon ligand binding, the C-terminal tail is displaced and becomes phosphorylated, thus increasing the kinase activity. In terms of biological role, receptor tyrosine kinase that transduces signals from the extracellular matrix into the cytoplasm by binding to MST1 ligand. Regulates many physiological processes including cell survival, migration and differentiation. Ligand binding at the cell surface induces autophosphorylation of RON on its intracellular domain that provides docking sites for downstream signaling molecules. Following activation by ligand, interacts with the PI3-kinase subunit PIK3R1, PLCG1 or the adapter GAB1. Recruitment of these downstream effectors by RON leads to the activation of several signaling cascades including the RAS-ERK, PI3 kinase-AKT, or PLCgamma-PKC. RON signaling activates the wound healing response by promoting epithelial cell migration, proliferation as well as survival at the wound site. Also plays a role in the innate immune response by regulating the migration and phagocytic activity of macrophages. Alternatively, RON can also promote signals such as cell migration and proliferation in response to growth factors other than MST1 ligand. In Mus musculus (Mouse), this protein is Macrophage-stimulating protein receptor (Mst1r).